The sequence spans 173 residues: DNA-directed RNA polymerase subunit delta (173 aa).

The region spanning 14–81 (MALVEIAHEL…SDQTWGLRSW (68 aa)) is the HTH HARE-type domain. Positions 110-173 (LDLDEFEEID…DYDDEEEEIK (64 aa)) are disordered.

It belongs to the RpoE family. RNAP is composed of a core of 2 alpha, a beta and a beta' subunit. The core is associated with a delta subunit, and at least one of epsilon or omega. When a sigma factor is associated with the core the holoenzyme is formed, which can initiate transcription.

Participates in both the initiation and recycling phases of transcription. In the presence of the delta subunit, RNAP displays an increased specificity of transcription, a decreased affinity for nucleic acids, and an increased efficiency of RNA synthesis because of enhanced recycling. May function in sigma factor switching. It displaces RNA bound to RNA polymerase in a binary complex. The protein is DNA-directed RNA polymerase subunit delta of Bacillus subtilis (strain 168).